Reading from the N-terminus, the 50-residue chain is Gene 38 protein (50 aa).

The sequence is that of Gene 38 protein (38) from Mycobacterium (Mycobacteriophage D29).